The sequence spans 281 residues: Urease accessory protein UreD (281 aa).

The disordered stretch occupies residues 1–25; that stretch reads MLNTLEPQPCETDALSPRLQRSTGS.

This sequence belongs to the UreD family. In terms of assembly, ureD, UreF and UreG form a complex that acts as a GTP-hydrolysis-dependent molecular chaperone, activating the urease apoprotein by helping to assemble the nickel containing metallocenter of UreC. The UreE protein probably delivers the nickel.

Its subcellular location is the cytoplasm. Its function is as follows. Required for maturation of urease via the functional incorporation of the urease nickel metallocenter. This Dinoroseobacter shibae (strain DSM 16493 / NCIMB 14021 / DFL 12) protein is Urease accessory protein UreD.